Reading from the N-terminus, the 167-residue chain is MKLNQISDNPGATKDRMRVGRGIGSGKGKTAGRGVKGQKARTGVAIKGFEGGQMPLHRRLPKRGFNNLYAQDLNEVNLGRIQEAVDAGKLDKAATVTVESLVAAGIIARPRDGVKLLGVGELTAKLSFEVTRASKSAVEAVEKAGGSVSVVYAQGASTRGGSEAATA.

The span at 1 to 10 (MKLNQISDNP) shows a compositional bias: polar residues. The interval 1-37 (MKLNQISDNPGATKDRMRVGRGIGSGKGKTAGRGVKG) is disordered. Positions 21-35 (RGIGSGKGKTAGRGV) are enriched in gly residues.

Belongs to the universal ribosomal protein uL15 family. In terms of assembly, part of the 50S ribosomal subunit.

In terms of biological role, binds to the 23S rRNA. This chain is Large ribosomal subunit protein uL15, found in Methylobacterium radiotolerans (strain ATCC 27329 / DSM 1819 / JCM 2831 / NBRC 15690 / NCIMB 10815 / 0-1).